A 115-amino-acid polypeptide reads, in one-letter code: Large ribosomal subunit protein uL18 (115 aa).

Belongs to the universal ribosomal protein uL18 family. In terms of assembly, part of the 50S ribosomal subunit; part of the 5S rRNA/L5/L18/L25 subcomplex. Contacts the 5S and 23S rRNAs.

In terms of biological role, this is one of the proteins that bind and probably mediate the attachment of the 5S RNA into the large ribosomal subunit, where it forms part of the central protuberance. This chain is Large ribosomal subunit protein uL18, found in Baumannia cicadellinicola subsp. Homalodisca coagulata.